A 491-amino-acid polypeptide reads, in one-letter code: UDP-N-acetylmuramate--L-alanine ligase (491 aa).

An ATP-binding site is contributed by 126–132 (GTHGKTT).

It belongs to the MurCDEF family.

Its subcellular location is the cytoplasm. It catalyses the reaction UDP-N-acetyl-alpha-D-muramate + L-alanine + ATP = UDP-N-acetyl-alpha-D-muramoyl-L-alanine + ADP + phosphate + H(+). The protein operates within cell wall biogenesis; peptidoglycan biosynthesis. Its function is as follows. Cell wall formation. This Salmonella arizonae (strain ATCC BAA-731 / CDC346-86 / RSK2980) protein is UDP-N-acetylmuramate--L-alanine ligase.